The chain runs to 312 residues: Olfactory receptor 4L1 (312 aa).

At 1-25 the chain is on the extracellular side; it reads MDLKNGSLVTEFILLGFFGRWELQI. Asn-5 carries an N-linked (GlcNAc...) asparagine glycan. The chain crosses the membrane as a helical span at residues 26–49; that stretch reads FFFVTFSLIYGATVMGNILIMVTV. Over 50-57 the chain is Cytoplasmic; that stretch reads TCRSTLHS. Residues 58 to 79 form a helical membrane-spanning segment; it reads PLYFLLGNLSFLDMCLSTATTP. At 80-100 the chain is on the extracellular side; sequence KMIIDLLTDHKTISVWGCVTQ. Cysteines 97 and 189 form a disulfide. A helical transmembrane segment spans residues 101–120; it reads MFFMHFFGGAEMTLLIIMAF. The Cytoplasmic portion of the chain corresponds to 121–139; that stretch reads DRYVAICKPLHYRTIMSHK. Residues 140 to 158 traverse the membrane as a helical segment; that stretch reads LLKGFAILSWIIGFLHSIS. Residues 159-195 lie on the Extracellular side of the membrane; sequence QIVLTMNLPFCGHNVINNIFCDLPLVIKLACIETYTL. The chain crosses the membrane as a helical span at residues 196 to 219; the sequence is ELFVIADSGLLSFTCFILLLVSYI. Residues 220–235 lie on the Cytoplasmic side of the membrane; it reads VILVSVPKKSSHGLSK. Residues 236–258 form a helical membrane-spanning segment; sequence ALSTLSAHIIVVTLFFGPCIFIY. Residues 259–269 lie on the Extracellular side of the membrane; that stretch reads VWPFSSLASNK. Asn-268 carries an N-linked (GlcNAc...) asparagine glycan. A helical membrane pass occupies residues 270 to 289; it reads TLAVFYTVITPLLNPSIYTL. The Cytoplasmic segment spans residues 290–312; sequence RNKKMQEAIRKLRFQYVSSAQNF.

It belongs to the G-protein coupled receptor 1 family.

Its subcellular location is the cell membrane. In terms of biological role, odorant receptor. The protein is Olfactory receptor 4L1 (OR4L1) of Homo sapiens (Human).